A 324-amino-acid polypeptide reads, in one-letter code: MELLPHEKQVVEYEKTIADFKEKNKENSLLSSSEIQKLENRLDRLKEKIYSNLTPWERVQICRHPSRPRTINYIEGMCEEFVELCGDRTFRDDPAVVGGFAKIQGQRFMLIGQEKGCDTTSRMHRNFGMLCPEGFRKALRLAKMAEKFGLPIIFLVDTPGAFPGLTAEERGQGWAIATNLFELARLATPIIVVVIGEGCSGGALGMAIGDVVAMLEHSYYSVISPEGCASILWKDPKKNSDAAAMLKMHGEDLKGFAIVDAVIKEPIGGAHHNPVATYRSVQEYVLQEWLKLKDLPVEELLEKRYQKFRTIGLYETSSESSSEA.

One can recognise a CoA carboxyltransferase C-terminal domain in the interval Arg41 to Lys291.

It belongs to the AccA family. In terms of assembly, acetyl-CoA carboxylase is a heterohexamer composed of biotin carboxyl carrier protein (AccB), biotin carboxylase (AccC) and two subunits each of ACCase subunit alpha (AccA) and ACCase subunit beta (AccD).

It is found in the cytoplasm. It catalyses the reaction N(6)-carboxybiotinyl-L-lysyl-[protein] + acetyl-CoA = N(6)-biotinyl-L-lysyl-[protein] + malonyl-CoA. The protein operates within lipid metabolism; malonyl-CoA biosynthesis; malonyl-CoA from acetyl-CoA: step 1/1. Its function is as follows. Component of the acetyl coenzyme A carboxylase (ACC) complex. First, biotin carboxylase catalyzes the carboxylation of biotin on its carrier protein (BCCP) and then the CO(2) group is transferred by the carboxyltransferase to acetyl-CoA to form malonyl-CoA. In Chlamydia muridarum (strain MoPn / Nigg), this protein is Acetyl-coenzyme A carboxylase carboxyl transferase subunit alpha.